Here is a 933-residue protein sequence, read N- to C-terminus: MKLKETLNLGKIAFPMRADLPNKEPQWQAAWEQAELYKKRQELNAGKPAFHLHDGPPYANGNIHVGHALNKISKDIIVRSKSMSGFQAPYVPGWDTHGLPIEQVLAKQGIKRKEMNLAEYLEMCRQYALSQVDKQRDDFKRLGVSADWENPYVTLDPQFEADQIRVFGAMAEKGYIYRGAKPVYWSWSSESALAEAEIEYHDIDSTSLYYANKVKDGKGILDTNTYIVVWTTTPFTVTASRGLTVGPDMDYLVVKPAGSDRQYVVAEGLLDSLAGKFGWESFETLASHKGADLEYIVTEHPWDTDVEELVILGDHVTLESGTGIVHTAPGFGEDDYNVGTKYKLEVAVTVDERGLMMENAGPDFHGQFYNKVTPIVIDKLGDLLLAQEVINHSYPFDWRTKKPIIWRAVPQWFASVSDFRQDILDEIEKTTFHPSWGETRLYNMIRDRGDWVISRQRAWGVPLPIFYAEDGTAIMTKEVTDHVADLFQENGSIIWWQKEAKDLLPEGFTHPGSPNGEFTKETDIMDVWFDSGSSWNGVMNARENLSYPADLYLEGSDQYRGWFNSSLITSVAVNGHAPYKAILSQGFVLDGKGEKMSKSKGNIISPNDVAKQYGADILRLWVASVDTDNDVRVSMEILGQVSETYRKIRNTLRFLIANTSDFNPATDTVAYADLGAVDKYMTIVFNQLVATITDAYERYDFMAIYKAVVNFVTVDLSAFYLDFAKDVVYIEAANSLERRRMQTVFYDILVKITKLLTPILPHTTEEIWSYLEYESEAFVQLAEMPVAETFSAQEDILEAWSAFMTLRTQAQKALEEARNAKIIGKSLEAHLTIYASEEVKTLLTALDSDIALLLIVSQLTIADLADAPADAVAFEGIAFMVEHAIGEVCERSRRIDPTTRMRSYNAFVCDHSAKIIEENFPEAVAEGFEESGK.

Positions 57 to 67 (PYANGNIHVGH) match the 'HIGH' region motif. Residue Glu554 coordinates L-isoleucyl-5'-AMP. Positions 595-599 (KMSKS) match the 'KMSKS' region motif. Lys598 contributes to the ATP binding site.

This sequence belongs to the class-I aminoacyl-tRNA synthetase family. IleS type 1 subfamily. Monomer.

It localises to the cytoplasm. It catalyses the reaction tRNA(Ile) + L-isoleucine + ATP = L-isoleucyl-tRNA(Ile) + AMP + diphosphate. In terms of biological role, catalyzes the attachment of isoleucine to tRNA(Ile). As IleRS can inadvertently accommodate and process structurally similar amino acids such as valine, to avoid such errors it has two additional distinct tRNA(Ile)-dependent editing activities. One activity is designated as 'pretransfer' editing and involves the hydrolysis of activated Val-AMP. The other activity is designated 'posttransfer' editing and involves deacylation of mischarged Val-tRNA(Ile). The polypeptide is Isoleucine--tRNA ligase (Streptococcus pyogenes serotype M6 (strain ATCC BAA-946 / MGAS10394)).